A 534-amino-acid chain; its full sequence is CTP synthase (534 aa).

The tract at residues 1–268 (MAAKYIFVTG…DQIVCDHLQL (268 aa)) is amidoligase domain. Ser14 lines the CTP pocket. Ser14 is a UTP binding site. An ATP-binding site is contributed by 15–20 (SLGKGI). An L-glutamine-binding site is contributed by Tyr55. Asp72 is a binding site for ATP. Residues Asp72 and Glu142 each coordinate Mg(2+). Residues 149–151 (DIE), 189–194 (KSKPTQ), and Lys225 contribute to the CTP site. UTP-binding positions include 189-194 (KSKPTQ) and Lys225. Positions 293–534 (RIAIVGKYVE…FVRNALAAQA (242 aa)) constitute a Glutamine amidotransferase type-1 domain. L-glutamine is bound at residue Gly355. Cys382 acts as the Nucleophile; for glutamine hydrolysis in catalysis. Residues 383–386 (LGMQ), Glu406, and Arg463 contribute to the L-glutamine site. Active-site residues include His508 and Glu510.

The protein belongs to the CTP synthase family. As to quaternary structure, homotetramer.

The enzyme catalyses UTP + L-glutamine + ATP + H2O = CTP + L-glutamate + ADP + phosphate + 2 H(+). The catalysed reaction is L-glutamine + H2O = L-glutamate + NH4(+). It catalyses the reaction UTP + NH4(+) + ATP = CTP + ADP + phosphate + 2 H(+). Its pathway is pyrimidine metabolism; CTP biosynthesis via de novo pathway; CTP from UDP: step 2/2. Its activity is regulated as follows. Allosterically activated by GTP, when glutamine is the substrate; GTP has no effect on the reaction when ammonia is the substrate. The allosteric effector GTP functions by stabilizing the protein conformation that binds the tetrahedral intermediate(s) formed during glutamine hydrolysis. Inhibited by the product CTP, via allosteric rather than competitive inhibition. Its function is as follows. Catalyzes the ATP-dependent amination of UTP to CTP with either L-glutamine or ammonia as the source of nitrogen. Regulates intracellular CTP levels through interactions with the four ribonucleotide triphosphates. The protein is CTP synthase of Shouchella clausii (strain KSM-K16) (Alkalihalobacillus clausii).